A 502-amino-acid polypeptide reads, in one-letter code: Lysine--tRNA ligase (502 aa).

Positions 411 and 418 each coordinate Mg(2+).

The protein belongs to the class-II aminoacyl-tRNA synthetase family. Homodimer. The cofactor is Mg(2+).

It is found in the cytoplasm. It carries out the reaction tRNA(Lys) + L-lysine + ATP = L-lysyl-tRNA(Lys) + AMP + diphosphate. In Chromohalobacter salexigens (strain ATCC BAA-138 / DSM 3043 / CIP 106854 / NCIMB 13768 / 1H11), this protein is Lysine--tRNA ligase.